A 26-amino-acid chain; its full sequence is Morintide mO4 (26 aa).

Residues 1–26 form the Chitin-binding type-1 domain; that stretch reads NRLCCSQYGFCGTTSEYCSRVSGCQS. Cysteine 4 and cysteine 18 are joined by a disulfide.

In terms of tissue distribution, seeds (at protein level).

Its function is as follows. Chitin-binding protein which functions in defense against chitin-containing fungal pathogens. This Moringa oleifera (Horseradish tree) protein is Morintide mO4.